Consider the following 71-residue polypeptide: ATP synthase subunit c (71 aa).

The next 2 helical transmembrane spans lie at 9–29 and 49–69; these read MIGYGLAAIGSAIGVGLIFAA and LLGFALAEALAILGLVFAFVI.

It belongs to the ATPase C chain family. As to quaternary structure, F-type ATPases have 2 components, F(1) - the catalytic core - and F(0) - the membrane proton channel. F(1) has five subunits: alpha(3), beta(3), gamma(1), delta(1), epsilon(1). F(0) has three main subunits: a(1), b(2) and c(10-14). The alpha and beta chains form an alternating ring which encloses part of the gamma chain. F(1) is attached to F(0) by a central stalk formed by the gamma and epsilon chains, while a peripheral stalk is formed by the delta and b chains.

The protein resides in the cell membrane. In terms of biological role, f(1)F(0) ATP synthase produces ATP from ADP in the presence of a proton or sodium gradient. F-type ATPases consist of two structural domains, F(1) containing the extramembraneous catalytic core and F(0) containing the membrane proton channel, linked together by a central stalk and a peripheral stalk. During catalysis, ATP synthesis in the catalytic domain of F(1) is coupled via a rotary mechanism of the central stalk subunits to proton translocation. Its function is as follows. Key component of the F(0) channel; it plays a direct role in translocation across the membrane. A homomeric c-ring of between 10-14 subunits forms the central stalk rotor element with the F(1) delta and epsilon subunits. The polypeptide is ATP synthase subunit c (Micrococcus luteus (strain ATCC 4698 / DSM 20030 / JCM 1464 / CCM 169 / CCUG 5858 / IAM 1056 / NBRC 3333 / NCIMB 9278 / NCTC 2665 / VKM Ac-2230) (Micrococcus lysodeikticus)).